The primary structure comprises 848 residues: ATP-dependent Clp protease ATP-binding subunit ClpC1 (848 aa).

One can recognise a Clp R domain in the interval 2-144 (FERFTDRARR…RQQVIQLLSG (143 aa)). Repeat regions lie at residues 5 to 70 (FTDR…IGQG) and 80 to 144 (FTPR…LLSG). Residues 171-418 (LDQFGRNLTA…RMRIRRMTAP (248 aa)) form an i region. 216–223 (GEPGVGKT) is a binding site for ATP. In terms of domain architecture, UVR spans 425 to 460 (DEKIAEARREKESAIDAQDFEKAASLRDREKTLVAQ). The segment at 479–670 (VDDEQIAEVL…VLIFTSNLGT (192 aa)) is II. 553-560 (GPSGVGKT) provides a ligand contact to ATP. A disordered region spans residues 821–848 (TGTRKPPAEPDLAKAGAHSAGGPEPAAR).

Belongs to the ClpA/ClpB family. ClpC subfamily.

Functionally, ATP-dependent specificity component of the Clp protease. It directs the protease to specific substrates. Can perform chaperone functions in the absence of ClpP. Degrades anti-sigma-E factor RseA in the presence of ClpP2. This chain is ATP-dependent Clp protease ATP-binding subunit ClpC1 (clpC1), found in Mycobacterium tuberculosis (strain ATCC 25618 / H37Rv).